The primary structure comprises 500 residues: Aspartyl/glutamyl-tRNA(Asn/Gln) amidotransferase subunit B (500 aa).

The protein belongs to the GatB/GatE family. GatB subfamily. As to quaternary structure, heterotrimer of A, B and C subunits.

It catalyses the reaction L-glutamyl-tRNA(Gln) + L-glutamine + ATP + H2O = L-glutaminyl-tRNA(Gln) + L-glutamate + ADP + phosphate + H(+). The catalysed reaction is L-aspartyl-tRNA(Asn) + L-glutamine + ATP + H2O = L-asparaginyl-tRNA(Asn) + L-glutamate + ADP + phosphate + 2 H(+). In terms of biological role, allows the formation of correctly charged Asn-tRNA(Asn) or Gln-tRNA(Gln) through the transamidation of misacylated Asp-tRNA(Asn) or Glu-tRNA(Gln) in organisms which lack either or both of asparaginyl-tRNA or glutaminyl-tRNA synthetases. The reaction takes place in the presence of glutamine and ATP through an activated phospho-Asp-tRNA(Asn) or phospho-Glu-tRNA(Gln). This Clavibacter sepedonicus (Clavibacter michiganensis subsp. sepedonicus) protein is Aspartyl/glutamyl-tRNA(Asn/Gln) amidotransferase subunit B.